The chain runs to 271 residues: Phosphatidylinositol transfer protein alpha isoform (271 aa).

The a 1,2-diacyl-sn-glycero-3-phospho-(1D-myo-inositol) site is built by Thr59, Lys61, Glu86, Asn90, Thr97, and Lys195. Lys216 carries the post-translational modification N6-acetyllysine. Basic and acidic residues predominate over residues 251-264 (TKRQLDEMRQKDPV). The disordered stretch occupies residues 251–271 (TKRQLDEMRQKDPVKGMTADD).

Belongs to the PtdIns transfer protein family. PI transfer class I subfamily. Phosphorylated by PKC in a calcium and phosphatidylserine-dependent manner.

It is found in the cytoplasm. The protein resides in the nucleus. It catalyses the reaction a 1,2-diacyl-sn-glycero-3-phosphocholine(in) = a 1,2-diacyl-sn-glycero-3-phosphocholine(out). The catalysed reaction is a 1,2-diacyl-sn-glycero-3-phospho-(1D-myo-inositol)(in) = a 1,2-diacyl-sn-glycero-3-phospho-(1D-myo-inositol)(out). Functionally, catalyzes the transfer of phosphatidylinositol (PI) and phosphatidylcholine (PC) between membranes. Shows a preference for PI and PC containing shorter saturated or monosaturated acyl chains at the sn-1 and sn-2 positions. Preference order for PC is C16:1 &gt; C16:0 &gt; C18:1 &gt; C18:0 &gt; C20:4 and for PI is C16:1 &gt; C16:0 &gt; C18:1 &gt; C18:0 &gt; C20:4 &gt; C20:3. The polypeptide is Phosphatidylinositol transfer protein alpha isoform (Pitpna) (Mus musculus (Mouse)).